The primary structure comprises 348 residues: Holliday junction branch migration complex subunit RuvB (348 aa).

Residues 4–186 (TDRIISANTV…FGIIQRLEFY (183 aa)) are large ATPase domain (RuvB-L). ATP is bound by residues Ile-25, Arg-26, Gly-67, Lys-70, Thr-71, Thr-72, 133–135 (EDY), Arg-176, Tyr-186, and Arg-223. Thr-71 contributes to the Mg(2+) binding site. The small ATPAse domain (RuvB-S) stretch occupies residues 187–257 (SVDDLAKIVY…IADKALTMLK (71 aa)). Residues 260–348 (PVGFDHMDHK…SSDQQQNLSL (89 aa)) form a head domain (RuvB-H) region. DNA-binding residues include Arg-315 and Arg-320.

Belongs to the RuvB family. Homohexamer. Forms an RuvA(8)-RuvB(12)-Holliday junction (HJ) complex. HJ DNA is sandwiched between 2 RuvA tetramers; dsDNA enters through RuvA and exits via RuvB. An RuvB hexamer assembles on each DNA strand where it exits the tetramer. Each RuvB hexamer is contacted by two RuvA subunits (via domain III) on 2 adjacent RuvB subunits; this complex drives branch migration. In the full resolvosome a probable DNA-RuvA(4)-RuvB(12)-RuvC(2) complex forms which resolves the HJ.

It is found in the cytoplasm. It carries out the reaction ATP + H2O = ADP + phosphate + H(+). The RuvA-RuvB-RuvC complex processes Holliday junction (HJ) DNA during genetic recombination and DNA repair, while the RuvA-RuvB complex plays an important role in the rescue of blocked DNA replication forks via replication fork reversal (RFR). RuvA specifically binds to HJ cruciform DNA, conferring on it an open structure. The RuvB hexamer acts as an ATP-dependent pump, pulling dsDNA into and through the RuvAB complex. RuvB forms 2 homohexamers on either side of HJ DNA bound by 1 or 2 RuvA tetramers; 4 subunits per hexamer contact DNA at a time. Coordinated motions by a converter formed by DNA-disengaged RuvB subunits stimulates ATP hydrolysis and nucleotide exchange. Immobilization of the converter enables RuvB to convert the ATP-contained energy into a lever motion, pulling 2 nucleotides of DNA out of the RuvA tetramer per ATP hydrolyzed, thus driving DNA branch migration. The RuvB motors rotate together with the DNA substrate, which together with the progressing nucleotide cycle form the mechanistic basis for DNA recombination by continuous HJ branch migration. Branch migration allows RuvC to scan DNA until it finds its consensus sequence, where it cleaves and resolves cruciform DNA. The polypeptide is Holliday junction branch migration complex subunit RuvB (Francisella philomiragia subsp. philomiragia (strain ATCC 25017 / CCUG 19701 / FSC 153 / O#319-036)).